The sequence spans 55 residues: Beta-toxin Cn7 (55 aa).

Residues 1–55 (KEGYIVNYHDGCKYECYKLGDNDYCLRECKLRVGKGAGGYCYAFACWCTHLYEQA) form the LCN-type CS-alpha/beta domain. Cystine bridges form between Cys-16/Cys-41, Cys-25/Cys-46, and Cys-29/Cys-48.

The protein belongs to the long (3 C-C) scorpion toxin superfamily. Sodium channel inhibitor family. Beta subfamily. In terms of tissue distribution, expressed by the venom gland.

The protein localises to the secreted. Functionally, beta toxins bind voltage-independently at site-4 of sodium channels (Nav) and shift the voltage of activation toward more negative potentials thereby affecting sodium channel activation and promoting spontaneous and repetitive firing. The sequence is that of Beta-toxin Cn7 from Centruroides noxius (Mexican scorpion).